The chain runs to 278 residues: Orotidine 5'-phosphate decarboxylase (278 aa).

The active-site Proton donor is the Lys-95.

It belongs to the OMP decarboxylase family. Type 2 subfamily.

It catalyses the reaction orotidine 5'-phosphate + H(+) = UMP + CO2. It functions in the pathway pyrimidine metabolism; UMP biosynthesis via de novo pathway; UMP from orotate: step 2/2. This is Orotidine 5'-phosphate decarboxylase from Corynebacterium glutamicum (strain R).